We begin with the raw amino-acid sequence, 336 residues long: Atypical chemokine receptor 1 (336 aa).

Topologically, residues 1-63 are extracellular; the sequence is MGNCLHPAEL…CNLLDDSALP (63 aa). Residues Asn-16, Asn-27, and Asn-33 are each glycosylated (N-linked (GlcNAc...) asparagine). Intrachain disulfides connect Cys-51/Cys-276 and Cys-129/Cys-195. Residues 64-84 form a helical membrane-spanning segment; the sequence is FFILVSVLGILASGIVLFMFF. Residues 85-95 lie on the Cytoplasmic side of the membrane; the sequence is RPLFHWQLCPG. The chain crosses the membrane as a helical span at residues 96-116; the sequence is WPVLAQLAVGSALFSIVVPIL. At 117–129 the chain is on the extracellular side; the sequence is APGLGNTRSSALC. The chain crosses the membrane as a helical span at residues 130-153; it reads SLGYCVWYGSAFAQALLLGCHASL. Residues 154-166 lie on the Cytoplasmic side of the membrane; that stretch reads GPKLGADQVPGLT. The helical transmembrane segment at 167–187 threads the bilayer; the sequence is LGLSVGLWGVAALLTLPVTLA. The Extracellular segment spans residues 188–207; it reads SGASGGLCTPVYSMELKALQ. The helical transmembrane segment at 208–228 threads the bilayer; sequence ATHAVACLAIFVLLPLGLFGA. Topologically, residues 229–244 are cytoplasmic; sequence KGLKKALGMGPGPWMN. Residues 245-265 form a helical membrane-spanning segment; that stretch reads ILWAWFIFWWPHGVVLGLDFL. Residues 266–287 lie on the Extracellular side of the membrane; it reads VRSKLLLLSTCLAQQALDLLLN. Residues 288–308 form a helical membrane-spanning segment; it reads LAEALAILHCVATPLLLALFC. At 309–336 the chain is on the cytoplasmic side; sequence HQATRTLLPSLPLPEGWSSHLDTLGSKS.

The protein belongs to the G-protein coupled receptor 1 family. Atypical chemokine receptor subfamily.

The protein resides in the early endosome. Its subcellular location is the recycling endosome. It localises to the membrane. Its function is as follows. Atypical chemokine receptor that controls chemokine levels and localization via high-affinity chemokine binding that is uncoupled from classic ligand-driven signal transduction cascades, resulting instead in chemokine sequestration, degradation, or transcytosis. Also known as interceptor (internalizing receptor) or chemokine-scavenging receptor or chemokine decoy receptor. Has a promiscuous chemokine-binding profile, interacting with inflammatory chemokines of both the CXC and the CC subfamilies but not with homeostatic chemokines. Acts as a receptor for chemokines including CCL2, CCL5, CCL7, CCL11, CCL13, CCL14, CCL17, CXCL5, CXCL6, IL8/CXCL8, CXCL11, GRO, RANTES, MCP-1 and TARC. May regulate chemokine bioavailability and, consequently, leukocyte recruitment through two distinct mechanisms: when expressed in endothelial cells, it sustains the abluminal to luminal transcytosis of tissue-derived chemokines and their subsequent presentation to circulating leukocytes; when expressed in erythrocytes, serves as blood reservoir of cognate chemokines but also as a chemokine sink, buffering potential surges in plasma chemokine levels. The polypeptide is Atypical chemokine receptor 1 (ACKR1) (Papio hamadryas (Hamadryas baboon)).